The sequence spans 399 residues: Protein shisa-8 (399 aa).

Positions 1-36 (MERAGARGQRCGRRSHGLPLALRLALLLAGSPSGRA) are cleaved as a signal peptide. The Extracellular segment spans residues 37 to 136 (GAPEEQEIAG…APRDPARERS (100 aa)). Asn73 carries N-linked (GlcNAc...) asparagine glycosylation. Residues 137 to 157 (HTAVYAVCGVAALLVLVGIGA) traverse the membrane as a helical segment. Residues 158 to 399 (RLGLERAHSP…STNSKAEVTV (242 aa)) are Cytoplasmic-facing. Disordered regions lie at residues 207–248 (GDGV…GGSL) and 378–399 (FYSS…EVTV). The span at 389–399 (LSTNSKAEVTV) shows a compositional bias: polar residues.

This sequence belongs to the shisa family. Interacts with AMPAR subunits GRIA1 and GRIA2. As to expression, brain-specific. Highly expressed in cerebellum and olfactory bulb.

The protein localises to the membrane. Its function is as follows. May regulate trafficking and current kinetics of AMPA-type glutamate receptor (AMPAR) at synapses. In Mus musculus (Mouse), this protein is Protein shisa-8.